Consider the following 60-residue polypeptide: Large ribosomal subunit protein uL30 (60 aa).

Belongs to the universal ribosomal protein uL30 family. Part of the 50S ribosomal subunit.

The chain is Large ribosomal subunit protein uL30 from Bacillus cereus (strain G9842).